Here is a 214-residue protein sequence, read N- to C-terminus: MRVKHKPWAKDRLEEFPAIYIKNPEDFKGRWQEVFGNNNPIHIEIGSGKGQFISGMAKANPEINYIGIEMIESVLVSALDKAIEAEVPNLRLVARDAKLLEESFEKGEIAQIYLNFSDPWPKKRHTKRRLTNPTFLTIYERLLPKAGEIHFKTDNRSLFEYSLVAFSEYNMLLTFVSLDLHNSDYEGNIKTEYEEKFSAKGFPIYRLEAKFDRD.

4 residues coordinate S-adenosyl-L-methionine: Glu44, Glu69, Asp96, and Asp118. Residue Asp118 is part of the active site. Substrate contacts are provided by residues Lys122, Asp154, and 191 to 194; that span reads TEYE.

The protein belongs to the class I-like SAM-binding methyltransferase superfamily. TrmB family.

It carries out the reaction guanosine(46) in tRNA + S-adenosyl-L-methionine = N(7)-methylguanosine(46) in tRNA + S-adenosyl-L-homocysteine. The protein operates within tRNA modification; N(7)-methylguanine-tRNA biosynthesis. Its function is as follows. Catalyzes the formation of N(7)-methylguanine at position 46 (m7G46) in tRNA. The protein is tRNA (guanine-N(7)-)-methyltransferase of Listeria innocua serovar 6a (strain ATCC BAA-680 / CLIP 11262).